We begin with the raw amino-acid sequence, 680 residues long: Putative E3 ubiquitin-protein ligase UNKL (680 aa).

The interval 1 to 22 is disordered; it reads MPSVSKAAAAALSGSPPQTEKP. 4 C3H1-type zinc fingers span residues 75-104, 115-145, 243-277, and 283-310; these read YSPDVYCSKYNEATGVCPDGDECPYLHRTT, YYKTGTCIHETDARGHCVKNGLHCAFAHGPL, QYRSTPCPSVKHGDEWGEPSRCDGGDGCQYCHSRT, and PESTKCNDMRQTGYCPRGPFCAFAHVEK. Low complexity-rich tracts occupy residues 326–337, 375–396, 465–497, and 545–562; these read TSPSSTGSGQPG, VSSSVASSLASSAGSGSSSPTA, SLPRAPSLHSPSSASTSPLGSLSQPLPGPVGSS, and SPSPILSAGPPSSSSASP. 4 disordered regions span residues 326 to 358, 375 to 400, 442 to 520, and 545 to 566; these read TSPSSTGSGQPGNAKRRDSPAEGGPRGSEQDSK, VSSSVASSLASSAGSGSSSPTALPAP, DGHD…SAAS, and SPSPILSAGPPSSSSASPNGAE. The stretch at 563-619 forms a coiled coil; that stretch reads NGAELARVRRQLDEAKRKIRQWEESWQQVKQVCDAWQREAQEAKERARVADSDRQLA. Residues 639-674 form an RING-type zinc finger; it reads CVACRERAHGAVLRPCQHHILCEPCAATAPECPYCK.

Belongs to the unkempt family. As to quaternary structure, isoform 4 (C-terminal) interacts with the GTP-bound form of RAC1. Isoform 4 (C-terminal) interacts with SMARCD2/BAF60b. Post-translationally, isoform 4 is ubiquitinated in the C-terminal. Ubiquitination is enhanced by activated RAC1. The presence of the RING finger domain is not essential for ubiquitination to occur.

The protein localises to the cytoplasm. It is found in the nucleus. It participates in protein modification; protein ubiquitination. Its function is as follows. May participate in a protein complex showing an E3 ligase activity regulated by RAC1. Ubiquitination is directed towards itself and possibly other substrates, such as SMARCD2/BAF60b. Intrinsic E3 ligase activity has not been proven. The chain is Putative E3 ubiquitin-protein ligase UNKL (UNKL) from Homo sapiens (Human).